The chain runs to 707 residues: Acetyl-coenzyme A synthetase 1 (707 aa).

Residues 242–245 (RGGK) and Thr-361 contribute to the CoA site. Residues 437 to 439 (GEP), 461 to 466 (DTYWQT), Asp-553, and Arg-568 contribute to the ATP site. Ser-576 is a CoA binding site. Position 579 (Arg-579) interacts with ATP. CoA is bound at residue Arg-644. A Microbody targeting signal motif is present at residues 705–707 (VKL).

It belongs to the ATP-dependent AMP-binding enzyme family.

It localises to the microsome. Its subcellular location is the endoplasmic reticulum. It carries out the reaction acetate + ATP + CoA = acetyl-CoA + AMP + diphosphate. May be required for assimilation of ethanol and acetate. In Kluyveromyces lactis (strain ATCC 8585 / CBS 2359 / DSM 70799 / NBRC 1267 / NRRL Y-1140 / WM37) (Yeast), this protein is Acetyl-coenzyme A synthetase 1 (ACS1).